The chain runs to 509 residues: Putative ATP-dependent RNA helicase QP509L (509 aa).

The Helicase ATP-binding domain maps to 110 to 262 (KKLLSPYGRF…KIILHHLGQP (153 aa)). An ATP-binding site is contributed by 123 to 130 (LNTGLGKT). The short motif at 215-218 (DEAH) is the DEAH box element.

The protein belongs to the DEAD box helicase family. DEAH subfamily.

The catalysed reaction is ATP + H2O = ADP + phosphate + H(+). The chain is Putative ATP-dependent RNA helicase QP509L from Ornithodoros (relapsing fever ticks).